We begin with the raw amino-acid sequence, 221 residues long: Probable transaldolase (221 aa).

The Schiff-base intermediate with substrate role is filled by K87.

Belongs to the transaldolase family. Type 3B subfamily.

It is found in the cytoplasm. The catalysed reaction is D-sedoheptulose 7-phosphate + D-glyceraldehyde 3-phosphate = D-erythrose 4-phosphate + beta-D-fructose 6-phosphate. The protein operates within carbohydrate degradation; pentose phosphate pathway; D-glyceraldehyde 3-phosphate and beta-D-fructose 6-phosphate from D-ribose 5-phosphate and D-xylulose 5-phosphate (non-oxidative stage): step 2/3. In terms of biological role, transaldolase is important for the balance of metabolites in the pentose-phosphate pathway. This chain is Probable transaldolase, found in Syntrophobacter fumaroxidans (strain DSM 10017 / MPOB).